A 172-amino-acid chain; its full sequence is 3-hydroxydecanoyl-[acyl-carrier-protein] dehydratase (172 aa).

The active site involves histidine 71.

The protein belongs to the thioester dehydratase family. FabA subfamily. In terms of assembly, homodimer.

Its subcellular location is the cytoplasm. The catalysed reaction is a (3R)-hydroxyacyl-[ACP] = a (2E)-enoyl-[ACP] + H2O. It carries out the reaction (3R)-hydroxydecanoyl-[ACP] = (2E)-decenoyl-[ACP] + H2O. It catalyses the reaction (2E)-decenoyl-[ACP] = (3Z)-decenoyl-[ACP]. It functions in the pathway lipid metabolism; fatty acid biosynthesis. Necessary for the introduction of cis unsaturation into fatty acids. Catalyzes the dehydration of (3R)-3-hydroxydecanoyl-ACP to E-(2)-decenoyl-ACP and then its isomerization to Z-(3)-decenoyl-ACP. Can catalyze the dehydratase reaction for beta-hydroxyacyl-ACPs with saturated chain lengths up to 16:0, being most active on intermediate chain length. The chain is 3-hydroxydecanoyl-[acyl-carrier-protein] dehydratase from Maricaulis maris (strain MCS10) (Caulobacter maris).